A 599-amino-acid chain; its full sequence is Sulfite reductase [NADPH] flavoprotein alpha-component (599 aa).

Positions 64 to 202 (ITLISASQTG…VAAQWRARIV (139 aa)) constitute a Flavodoxin-like domain. Residues 70-75 (SQTGNA), 117-120 (STQG), and 153-162 (LGDTSYEFFC) contribute to the FMN site. One can recognise an FAD-binding FR-type domain in the interval 234-448 (EAPLRASLSV…IEHNDNFRLP (215 aa)). Residues threonine 322, alanine 356, 386 to 389 (RLYS), 404 to 406 (TVG), tyrosine 410, and 419 to 422 (GGAS) contribute to the FAD site. Residues 519–520 (SR), 525–529 (KIYVQ), and aspartate 561 each bind NADP(+). Tyrosine 599 is a binding site for FAD.

This sequence belongs to the NADPH-dependent sulphite reductase flavoprotein subunit CysJ family. The protein in the N-terminal section; belongs to the flavodoxin family. It in the C-terminal section; belongs to the flavoprotein pyridine nucleotide cytochrome reductase family. Alpha(8)-beta(8). The alpha component is a flavoprotein, the beta component is a hemoprotein. FAD is required as a cofactor. It depends on FMN as a cofactor.

It catalyses the reaction hydrogen sulfide + 3 NADP(+) + 3 H2O = sulfite + 3 NADPH + 4 H(+). Its pathway is sulfur metabolism; hydrogen sulfide biosynthesis; hydrogen sulfide from sulfite (NADPH route): step 1/1. Its function is as follows. Component of the sulfite reductase complex that catalyzes the 6-electron reduction of sulfite to sulfide. This is one of several activities required for the biosynthesis of L-cysteine from sulfate. The flavoprotein component catalyzes the electron flow from NADPH -&gt; FAD -&gt; FMN to the hemoprotein component. This Salmonella arizonae (strain ATCC BAA-731 / CDC346-86 / RSK2980) protein is Sulfite reductase [NADPH] flavoprotein alpha-component.